The sequence spans 302 residues: Zinc transporter ZIP1 (302 aa).

The Extracellular segment spans residues 1 to 6; that stretch reads MDYLLQ. Residues 7–27 form a helical membrane-spanning segment; that stretch reads VKVGALVGLLLLTLFFGFIPA. The Cytoplasmic portion of the chain corresponds to 28–44; sequence RMKWFHVTGGTELHKAV. The helical transmembrane segment at 45-65 threads the bilayer; it reads LSFVSCFAGGVFLSACLLDII. The Extracellular portion of the chain corresponds to 66–86; it reads PDYLSDIHGELQKRDLDDGFP. A helical transmembrane segment spans residues 87–107; the sequence is LPEFIMACGFFTVLILEKMVL. Over 108 to 158 the chain is Cytoplasmic; sequence SCTEGHRNEETAPLLAPAAPNGHAHGHPSVNDLEGSGHHVHVDFHAHSSFR. Residues 159-179 traverse the membrane as a helical segment; sequence SFMLFLSLSLHSVFEGLAIGL. The Extracellular segment spans residues 180–185; that stretch reads QTTNAK. Residues 186-206 traverse the membrane as a helical segment; sequence VLEICIAILVHKSIIVFSLSV. The Cytoplasmic portion of the chain corresponds to 207–219; it reads KLVQSAVKPLWVV. The chain crosses the membrane as a helical span at residues 220-240; it reads LYVTVFAIMSPLGIGIGIVVI. The Extracellular portion of the chain corresponds to 241–247; that stretch reads ETERQAG. The helical transmembrane segment at 248–268 threads the bilayer; the sequence is GLIQAVLEGLAAGTFIYITFL. Topologically, residues 269-281 are cytoplasmic; sequence EILPHELNSSERP. A helical membrane pass occupies residues 282–302; that stretch reads LLKVLFLLCGFSIMAALCFLG.

It belongs to the ZIP transporter (TC 2.A.5) family. In terms of tissue distribution, ubiquitous. Highest levels in ovary, high levels in heart, eye, kidney and brain, moderate levels in intestine and low levels in gill and skin.

The protein localises to the cell membrane. Its subcellular location is the endoplasmic reticulum membrane. The enzyme catalyses Zn(2+)(in) = Zn(2+)(out). Its function is as follows. Transporter for the divalent cation Zn(2+). Mediates the influx of Zn(2+) into cells from extracellular space. In Danio rerio (Zebrafish), this protein is Zinc transporter ZIP1 (slc39a1).